The sequence spans 80 residues: Putative membrane protein insertion efficiency factor (80 aa).

It belongs to the UPF0161 family.

The protein resides in the cell membrane. Could be involved in insertion of integral membrane proteins into the membrane. In Shouchella clausii (strain KSM-K16) (Alkalihalobacillus clausii), this protein is Putative membrane protein insertion efficiency factor.